Reading from the N-terminus, the 525-residue chain is Arylsulfatase G (525 aa).

A signal peptide spans 1–16 (MGWLFLKVLLVGMAFS). 3 residues coordinate Ca(2+): D44, D45, and C84. C84 (nucleophile) is an active-site residue. 3-oxoalanine (Cys) is present on C84. N-linked (GlcNAc...) asparagine glycosylation occurs at N117. K137 contributes to the substrate binding site. H139 is a catalytic residue. Position 162 (S162) interacts with substrate. The N-linked (GlcNAc...) asparagine glycan is linked to N215. H251 is a substrate binding site. Positions 302 and 303 each coordinate Ca(2+). N-linked (GlcNAc...) asparagine glycosylation is found at N356 and N497.

Belongs to the sulfatase family. It depends on Ca(2+) as a cofactor. In terms of processing, N-glycosylated with both high mannose and complex type sugars. The conversion to 3-oxoalanine (also known as C-formylglycine, FGly), of a serine or cysteine residue in prokaryotes and of a cysteine residue in eukaryotes, is critical for catalytic activity. Post-translationally, the 63-kDa precursor undergoes proteolytic processing in two steps, yielding two fragments in the first step (apparent molecular masses of 44 and 18 kDa). In the second step, the 44-kDa fragment is processed further to the 34- and 10-kDa chains. The 10-kDa chain is a cleavage product of the 44-kDa fragment but linked to the 18-kDa chain through a disulfide bridge. Highly expressed in the spleen, kidney, liver, brain, and testis (at protein level).

The protein localises to the lysosome. It catalyses the reaction an aryl sulfate + H2O = a phenol + sulfate + H(+). It carries out the reaction Hydrolysis of the 3-sulfate groups of the N-sulfo-D-glucosamine 3-O-sulfate units of heparin.. Functionally, displays arylsulfatase activity at acidic pH towards the artificial substrate p-nitrocatechol sulfate. Catalyzes the hydrolysis of the 3-sulfate groups of the N-sulfo-D-glucosamine 3-O-sulfate units of heparin. This is Arylsulfatase G (Arsg) from Mus musculus (Mouse).